Here is a 306-residue protein sequence, read N- to C-terminus: Ornithine carbamoyltransferase (306 aa).

Carbamoyl phosphate-binding positions include 53-56 (STRT), Q80, R104, and 131-134 (HPCQ). L-ornithine contacts are provided by residues N162, D219, and 223–224 (SM). Carbamoyl phosphate contacts are provided by residues 259-260 (CL) and R287.

It belongs to the aspartate/ornithine carbamoyltransferase superfamily. OTCase family.

The protein resides in the cytoplasm. The enzyme catalyses carbamoyl phosphate + L-ornithine = L-citrulline + phosphate + H(+). Its pathway is amino-acid biosynthesis; L-arginine biosynthesis; L-arginine from L-ornithine and carbamoyl phosphate: step 1/3. Functionally, reversibly catalyzes the transfer of the carbamoyl group from carbamoyl phosphate (CP) to the N(epsilon) atom of ornithine (ORN) to produce L-citrulline. The polypeptide is Ornithine carbamoyltransferase (Acinetobacter baumannii (strain ATCC 17978 / DSM 105126 / CIP 53.77 / LMG 1025 / NCDC KC755 / 5377)).